The following is a 292-amino-acid chain: WRKY transcription factor 55 (292 aa).

The interval 133–155 (VERSGASGSSTPRQRRRKDEGEE) is disordered. Residues 167-235 (NTDLPPDDNH…YRGSHTCYNS (69 aa)) constitute a DNA-binding region (WRKY).

Belongs to the WRKY group III family.

The protein localises to the nucleus. Its function is as follows. Transcription factor. Interacts specifically with the W box (5'-(T)TGAC[CT]-3'), a frequently occurring elicitor-responsive cis-acting element. This chain is WRKY transcription factor 55 (WRKY55), found in Arabidopsis thaliana (Mouse-ear cress).